The primary structure comprises 73 residues: Translation initiation factor IF-1 (73 aa).

The 73-residue stretch at 1 to 73 folds into the S1-like domain; that stretch reads MAKKQGAIEI…TRGRIVYRYK (73 aa).

This sequence belongs to the IF-1 family. In terms of assembly, component of the 30S ribosomal translation pre-initiation complex which assembles on the 30S ribosome in the order IF-2 and IF-3, IF-1 and N-formylmethionyl-tRNA(fMet); mRNA recruitment can occur at any time during PIC assembly.

Its subcellular location is the cytoplasm. Its function is as follows. One of the essential components for the initiation of protein synthesis. Stabilizes the binding of IF-2 and IF-3 on the 30S subunit to which N-formylmethionyl-tRNA(fMet) subsequently binds. Helps modulate mRNA selection, yielding the 30S pre-initiation complex (PIC). Upon addition of the 50S ribosomal subunit IF-1, IF-2 and IF-3 are released leaving the mature 70S translation initiation complex. The chain is Translation initiation factor IF-1 from Streptomyces coelicolor (strain ATCC BAA-471 / A3(2) / M145).